A 479-amino-acid polypeptide reads, in one-letter code: Siroheme synthase (479 aa).

The precorrin-2 dehydrogenase /sirohydrochlorin ferrochelatase stretch occupies residues 1–202; the sequence is MNYLPIFLDL…GRDSEAEAQL (202 aa). NAD(+)-binding positions include 22–23 and 43–44; these read ET and PA. Ser128 bears the Phosphoserine mark. Residues 217–479 are uroporphyrinogen-III C-methyltransferase; that stretch reads GEVYLVGAGP…TPLEAPDHLA (263 aa). Pro226 is a binding site for S-adenosyl-L-methionine. The Proton acceptor role is filled by Asp249. The Proton donor role is filled by Lys271. Residues 302-304, Ile307, 332-333, Met384, and Gly413 contribute to the S-adenosyl-L-methionine site; these read GGD and TA.

It in the N-terminal section; belongs to the precorrin-2 dehydrogenase / sirohydrochlorin ferrochelatase family. This sequence in the C-terminal section; belongs to the precorrin methyltransferase family.

The catalysed reaction is uroporphyrinogen III + 2 S-adenosyl-L-methionine = precorrin-2 + 2 S-adenosyl-L-homocysteine + H(+). The enzyme catalyses precorrin-2 + NAD(+) = sirohydrochlorin + NADH + 2 H(+). It carries out the reaction siroheme + 2 H(+) = sirohydrochlorin + Fe(2+). Its pathway is cofactor biosynthesis; adenosylcobalamin biosynthesis; precorrin-2 from uroporphyrinogen III: step 1/1. It functions in the pathway cofactor biosynthesis; adenosylcobalamin biosynthesis; sirohydrochlorin from precorrin-2: step 1/1. It participates in porphyrin-containing compound metabolism; siroheme biosynthesis; precorrin-2 from uroporphyrinogen III: step 1/1. The protein operates within porphyrin-containing compound metabolism; siroheme biosynthesis; siroheme from sirohydrochlorin: step 1/1. Its pathway is porphyrin-containing compound metabolism; siroheme biosynthesis; sirohydrochlorin from precorrin-2: step 1/1. Multifunctional enzyme that catalyzes the SAM-dependent methylations of uroporphyrinogen III at position C-2 and C-7 to form precorrin-2 via precorrin-1. Then it catalyzes the NAD-dependent ring dehydrogenation of precorrin-2 to yield sirohydrochlorin. Finally, it catalyzes the ferrochelation of sirohydrochlorin to yield siroheme. This is Siroheme synthase from Thiobacillus denitrificans (strain ATCC 25259 / T1).